Consider the following 230-residue polypeptide: Endonuclease NucS (230 aa).

The protein belongs to the NucS endonuclease family.

It localises to the cytoplasm. Cleaves both 3' and 5' ssDNA extremities of branched DNA structures. The protein is Endonuclease NucS of Corynebacterium glutamicum (strain R).